A 509-amino-acid chain; its full sequence is DAP3-binding cell death enhancer 1 (509 aa).

Residues 1–23 (MWRLTGILGRALPRLLGPGFRGI) constitute a mitochondrion transit peptide. Disordered regions lie at residues 19–60 (GFRG…RNRD) and 143–185 (VLPS…PGLL). Residues 24–101 (TPKPTSSDGP…AVLALHLARQ (78 aa)) constitute a propeptide, extended MTS. The segment covering 26-40 (KPTSSDGPQTTSTTL) has biased composition (polar residues). Composition is skewed to basic and acidic residues over residues 46–60 (NFDR…RNRD) and 156–168 (GLRE…EEPA). TPR repeat units lie at residues 213 to 245 (AGPP…QLSV), 246 to 278 (AIAF…RGYS), 279 to 313 (KAQY…VQGH), 314 to 351 (SLAQ…DSGL), 352 to 385 (TEAQ…SNGD), 386 to 423 (SQSR…GNEP), and 470 to 498 (ASST…AMPS). The SIFI-degron signature appears at 307–326 (LAAVQGHSLAQYRYARCLLQ).

Belongs to the DELE1 family. Interacts with DAP3. In terms of assembly, interacts (via TPR repeats) with EIF2AK1/HRI; activating the protein kinase activity of EIF2AK1/HRI, thereby promoting the integrated stress response (ISR). As to quaternary structure, homooctamer; oligomerization is required to activate EIF2AK1/HRI. Interacts (via TPR repeats) with EIF2AK1/HRI; activating the protein kinase activity of EIF2AK1/HRI, thereby promoting the integrated stress response (ISR). In terms of processing, unstable protein in absence of stress: imported in the mitochondrial matrix following processing by the mitochondrial-processing peptidase (MPP), where it is degraded by LONP1. Stabilized in response to iron deficiency: iron deficiency impairs mitochondrial import, promoting localization at the mitochondrial surface and stabilization. Cleaved by OMA1 in response to mitochondrial stress, generating the DAP3-binding cell death enhancer 1 short form (DELE1(S) or S-DELE1) that accumulates in the cytosol and activates the protein kinase activity of EIF2AK1/HRI. Protein cleavage by OMA1 can take place at different positions, and apparently does not require a specific sequence motif. Ubiquitinated and degraded by the SIFI complex once the mitochondrial stress has been resolved, thereby providing stress response silencing. Within the SIFI complex, UBR4 initiates ubiquitin chain that are further elongated or branched by KCMF1.

Its subcellular location is the mitochondrion. It localises to the mitochondrion outer membrane. The protein resides in the mitochondrion inner membrane. It is found in the cytoplasm. The protein localises to the cytosol. In terms of biological role, protein kinase activator that acts as a key activator of the integrated stress response (ISR) following various stresses, such as iron deficiency, mitochondrial stress or mitochondrial DNA breaks. Detects impaired protein import and processing in mitochondria, activating the ISR. May also required for the induction of death receptor-mediated apoptosis through the regulation of caspase activation. Its function is as follows. Protein kinase activator that activates the ISR in response to iron deficiency: iron deficiency impairs mitochondrial import, promoting DELE1 localization at the mitochondrial surface, where it binds and activates EIF2AK1/HRI to trigger the ISR. Functionally, protein kinase activator generated by protein cleavage in response to mitochondrial stress, which accumulates in the cytosol and specifically binds to and activates the protein kinase activity of EIF2AK1/HRI. It thereby activates the integrated stress response (ISR): EIF2AK1/HRI activation promotes eIF-2-alpha (EIF2S1) phosphorylation, leading to a decrease in global protein synthesis and the induction of selected genes, including the transcription factor ATF4, the master transcriptional regulator of the ISR. Also acts as an activator of PRKN-independent mitophagy: activates the protein kinase activity of EIF2AK1/HRI in response to mitochondrial damage, promoting eIF-2-alpha (EIF2S1) phosphorylation, leading to mitochondrial localization of EIF2S1 followed by induction of mitophagy. This Rattus norvegicus (Rat) protein is DAP3-binding cell death enhancer 1.